A 487-amino-acid polypeptide reads, in one-letter code: Betaine aldehyde dehydrogenase (487 aa).

K(+)-binding residues include Ile27 and Asp93. 149–151 (GAW) serves as a coordination point for NAD(+). Catalysis depends on Lys161, which acts as the Charge relay system. NAD(+) is bound by residues 175 to 178 (KPSE) and 228 to 231 (SVPT). Leu243 provides a ligand contact to K(+). Glu249 serves as the catalytic Proton acceptor. NAD(+) is bound by residues Gly251, Cys283, and Glu384. Catalysis depends on Cys283, which acts as the Nucleophile. A Cysteine sulfenic acid (-SOH) modification is found at Cys283. K(+) is bound by residues Lys454 and Gly457. The active-site Charge relay system is the Glu461.

It belongs to the aldehyde dehydrogenase family. Dimer of dimers. The cofactor is K(+).

It carries out the reaction betaine aldehyde + NAD(+) + H2O = glycine betaine + NADH + 2 H(+). Its pathway is amine and polyamine biosynthesis; betaine biosynthesis via choline pathway; betaine from betaine aldehyde: step 1/1. Functionally, involved in the biosynthesis of the osmoprotectant glycine betaine. Catalyzes the irreversible oxidation of betaine aldehyde to the corresponding acid. The chain is Betaine aldehyde dehydrogenase from Brucella suis (strain ATCC 23445 / NCTC 10510).